The chain runs to 68 residues: Cytochrome c3 (68 aa).

Heme is bound by residues histidine 17, histidine 20, cysteine 26, cysteine 29, histidine 30, histidine 45, cysteine 49, cysteine 52, histidine 53, cysteine 62, cysteine 65, and histidine 66.

Post-translationally, binds 3 heme groups per subunit.

Participates in sulfate respiration coupled with phosphorylation by transferring electrons from the enzyme dehydrogenase to ferredoxin. In Desulfuromonas acetoxidans (Chloropseudomonas ethylica), this protein is Cytochrome c3 (cyd).